We begin with the raw amino-acid sequence, 1487 residues long: Golgin subfamily A member 3 (1487 aa).

Methionine 1 is modified (N-acetylmethionine). The segment at 1-118 is disordered; sequence MDGASAKQDG…GTSAEGSVRK (118 aa). Serine 18 and serine 60 each carry phosphoserine. Residues 62-74 are compositionally biased toward polar residues; it reads DRSSQVAICQNGQ. Residues 121 to 141 form an interaction with GOPC region; sequence LQSLRLSLPMQETQLCSTASS. Residues 172–257 are golgi-targeting domain; the sequence is ERSSQPATKM…DYRTEDPSDS (86 aa). 2 disordered regions span residues 221–321 and 365–394; these read PKVG…SSLS and AAQH…SMES. Low complexity-rich tracts occupy residues 269–288, 312–321, and 365–375; these read SSLK…SPSS, SDSSSHSSLS, and AAQHQDQNQEA. Serine 270 is modified (phosphoserine). Residues 358-1454 are a coiled coil; sequence KDVLQAAAAQ…TITVHESLSS (1097 aa). Serine 381, serine 385, and serine 461 each carry phosphoserine. Basic and acidic residues predominate over residues 785 to 796; the sequence is KEELDRGARRLE. The disordered stretch occupies residues 785–804; that stretch reads KEELDRGARRLEEDTEETSG. Serine 979 is subject to Phosphoserine. Positions 1372–1382 are enriched in basic and acidic residues; sequence RGAAKKKEPKG. Disordered stretches follow at residues 1372 to 1396 and 1458 to 1487; these read RGAA…IKIP and VEAA…GLGQ. Serine 1387 carries the post-translational modification Phosphoserine. A compositionally biased stretch (basic and acidic residues) spans 1462–1474; it reads PAEHAHPRGDTKL. At serine 1479 the chain carries Phosphoserine.

As to quaternary structure, homodimer. Interacts with GOLGA7. Interacts with GOPC. Post-translationally, cleaved by caspases in apoptotic cells. As to expression, highly expressed in testis. Transcripts can be found in spermatids during spermatogenesis. No expression in Leydig cells, spermatogonia or spermatocytes. Detected at low levels in all tissues.

The protein resides in the cytoplasm. It is found in the golgi apparatus. Its subcellular location is the golgi stack membrane. In terms of biological role, plays an important role in spermatogenesis and/or testis development. Probably identical with the serologically detectable male antigen (SDM). Probably involved in maintaining Golgi structure. The polypeptide is Golgin subfamily A member 3 (Golga3) (Mus musculus (Mouse)).